We begin with the raw amino-acid sequence, 222 residues long: MAYDSNYTFPDPETSDKQGLLAIGGVLTPKRVLQAYSQGIFPWYEPGNPVLWWSPNPRLILIPNEFKISRSLKKTLKKPFKLTVDTAFQRVISYCATCSDRANKTWITSEMIETYTQLHEMGYAHSFEIWDGSELVGGLYGISLGHAFFGESMFHTITDASKVALHFLCSIMQSWNFDFIDCQLPTLHLMRLGAKIISRKEFLHMLQETLKYPDKKGNWSVN.

Belongs to the L/F-transferase family.

The protein localises to the cytoplasm. The catalysed reaction is N-terminal L-lysyl-[protein] + L-leucyl-tRNA(Leu) = N-terminal L-leucyl-L-lysyl-[protein] + tRNA(Leu) + H(+). It carries out the reaction N-terminal L-arginyl-[protein] + L-leucyl-tRNA(Leu) = N-terminal L-leucyl-L-arginyl-[protein] + tRNA(Leu) + H(+). It catalyses the reaction L-phenylalanyl-tRNA(Phe) + an N-terminal L-alpha-aminoacyl-[protein] = an N-terminal L-phenylalanyl-L-alpha-aminoacyl-[protein] + tRNA(Phe). In terms of biological role, functions in the N-end rule pathway of protein degradation where it conjugates Leu, Phe and, less efficiently, Met from aminoacyl-tRNAs to the N-termini of proteins containing an N-terminal arginine or lysine. The sequence is that of Leucyl/phenylalanyl-tRNA--protein transferase from Legionella pneumophila (strain Lens).